A 354-amino-acid chain; its full sequence is Annexin A13 (354 aa).

Annexin repeat units follow at residues 26–97 (NDPN…MLLT), 98–177 (DTDK…ALLQ), 203–275 (NLVE…LTLN), and 279–350 (NRPK…ALIG). The Ca(2+) site is built by Met39, Gly41, Gly43, Thr44, Glu46, Glu83, Met111, Gly113, Gly115, Glu118, Asp163, Asp265, Met292, Gly294, Leu295, Gly296, and Glu336.

Belongs to the annexin family. In terms of assembly, homodimer.

It localises to the tegument. It is found in the secreted. The protein resides in the extracellular exosome. The protein localises to the host cell. In terms of biological role, involved in reproduction of the worm. Involved in host-parasite interaction. Delivered into the host cell by means of parasite exosomes. Binds to acidic phospholipid membranes in a calcium-dependent manner in vitro. Causes aggregation of liposomes in the presence of calcium, but not in its absence. Likely to promote membrane fusion. May provide structural integrity within the tegument. This Schistosoma japonicum (Blood fluke) protein is Annexin A13.